Consider the following 409-residue polypeptide: Elongation factor Tu (409 aa).

The 205-residue stretch at 10–214 (KPHLNIGTIG…AVDSFIPTPE (205 aa)) folds into the tr-type G domain. Residues 19-26 (GHVDHGKT) form a G1 region. 19–26 (GHVDHGKT) lines the GTP pocket. Mg(2+) is bound at residue Thr-26. The segment at 60–64 (GITIN) is G2. The G3 stretch occupies residues 81–84 (DCPG). Residues 81-85 (DCPGH) and 136-139 (NKED) contribute to the GTP site. The interval 136–139 (NKED) is G4. Residues 174–176 (SGL) are G5.

This sequence belongs to the TRAFAC class translation factor GTPase superfamily. Classic translation factor GTPase family. EF-Tu/EF-1A subfamily. In terms of assembly, monomer.

The protein localises to the cytoplasm. It carries out the reaction GTP + H2O = GDP + phosphate + H(+). GTP hydrolase that promotes the GTP-dependent binding of aminoacyl-tRNA to the A-site of ribosomes during protein biosynthesis. This chain is Elongation factor Tu, found in Nostoc punctiforme (strain ATCC 29133 / PCC 73102).